Reading from the N-terminus, the 305-residue chain is RNA-binding protein with serine-rich domain 1 (305 aa).

The segment covering 1–10 has biased composition (basic residues); sequence MDLSGVKKKS. The segment at 1-161 is necessary for interaction with SRP54, nuclear localization and exon-skipping; the sequence is MDLSGVKKKS…KRRSPSPKPT (161 aa). A disordered region spans residues 1-170; it reads MDLSGVKKKS…TKVHIGRLTR (170 aa). The tract at residues 1 to 220 is necessary for interaction with the cleaved p110 isoform of CDC2L1; the sequence is MDLSGVKKKS…ENPDEAEKAL (220 aa). Residues Lys7 and Lys15 each participate in a glycyl lysine isopeptide (Lys-Gly) (interchain with G-Cter in SUMO2) cross-link. Residues 33–59 are compositionally biased toward basic and acidic residues; it reads DRSDEKSKDRSKDKGATKESSEKDRGR. Ser53 is subject to Phosphoserine; by CK2. Over residues 68 to 126 the composition is skewed to low complexity; sequence ASSGSSSTRSRSSSTSSSGSSTSTGSSSGSSSSSASSRSGSSSTSRSSSSSSSSGSPSP. The necessary for interactions with UPF2 and UPF3B and UPF2-dependent NMD stretch occupies residues 69 to 121; that stretch reads SSGSSSTRSRSSSTSSSGSSTSTGSSSGSSSSSASSRSGSSSTSRSSSSSSSS. Composition is skewed to basic residues over residues 127–143 and 151–167; these read SRRR…KSKP and RKRR…HIGR. A phosphoserine mark is found at Ser155 and Ser157. The interval 156-242 is necessary for interaction with PNN and exon-skipping; that stretch reads PSPKPTKVHI…ITATAVLAPW (87 aa). The interval 159–244 is interaction with SAP18 and ACIN1; it reads KPTKVHIGRL…ATAVLAPWPR (86 aa). Thr161 carries the post-translational modification Phosphothreonine. In terms of domain architecture, RRM spans 161-240; that stretch reads TKVHIGRLTR…QEITATAVLA (80 aa). The residue at position 218 (Lys218) is an N6-acetyllysine. A necessary for interaction with TRA2B, nuclear localization and exon-skipping region spans residues 238–305; the sequence is VLAPWPRPPP…RSRSSSNSSR (68 aa). Residues 240–305 are disordered; it reads APWPRPPPRR…RSRSSSNSSR (66 aa). Pro residues predominate over residues 242-262; it reads WPRPPPRRFSPPRRMLPPPPM. Residues 266 to 298 show a composition bias toward basic residues; that stretch reads SPPRMRRRSRSPRRRSPVRRRSRSPGRRRHRSR.

Belongs to the splicing factor SR family. Found in mRNA splicing-dependent exon junction complexes (EJC). Found in a post-splicing complex with NXF1, RBM8A, UPF1, UPF2, UPF3A, UPF3B and RNPS1. Component of the heterotrimeric ASAP (apoptosis- and splicing-associated protein) and PSAP complexes consisting of RNPS1, SAP18 and either ACIN1 or PNN, respectively; the ASAP and PSAP complexes probably are formed mutually exclusive. Component of the active spliceosome. Associates with polysomes. Interacts with the cleaved p110 isoform of CDC2L1, CSNK2A1, PNN, SART3, SRP54, SRRM1 and TRA2B/SFRS10. In terms of processing, phosphorylated on one or more of the four Ser/Thr residues (Ser-43, Thr-49, Ser-52 or Ser-53). Ser-53 phosphorylation site is important for splicing and translation stimulation activity in vitro. In terms of tissue distribution, ubiquitous.

The protein localises to the nucleus. Its subcellular location is the nucleus speckle. It is found in the cytoplasm. Functionally, part of pre- and post-splicing multiprotein mRNP complexes. Auxiliary component of the splicing-dependent multiprotein exon junction complex (EJC) deposited at splice junction on mRNAs. The EJC is a dynamic structure consisting of core proteins and several peripheral nuclear and cytoplasmic associated factors that join the complex only transiently either during EJC assembly or during subsequent mRNA metabolism. Component of the ASAP and PSAP complexes which bind RNA in a sequence-independent manner and are proposed to be recruited to the EJC prior to or during the splicing process and to regulate specific excision of introns in specific transcription subsets. The ASAP complex can inhibit RNA processing during in vitro splicing reactions. The ASAP complex promotes apoptosis and is disassembled after induction of apoptosis. Enhances the formation of the ATP-dependent A complex of the spliceosome. Involved in both constitutive splicing and, in association with SRP54 and TRA2B/SFRS10, in distinctive modulation of alternative splicing in a substrate-dependent manner. Involved in the splicing modulation of BCL2L1/Bcl-X (and probably other apoptotic genes); specifically inhibits formation of proapoptotic isoforms such as Bcl-X(S); the activity is different from the established EJC assembly and function. Participates in mRNA 3'-end cleavage. Involved in UPF2-dependent nonsense-mediated decay (NMD) of mRNAs containing premature stop codons. Also mediates increase of mRNA abundance and translational efficiency. Binds spliced mRNA 20-25 nt upstream of exon-exon junctions. The protein is RNA-binding protein with serine-rich domain 1 (RNPS1) of Homo sapiens (Human).